Consider the following 792-residue polypeptide: Probable exo-1,4-beta-xylosidase xlnD (792 aa).

The first 20 residues, 1–20, serve as a signal peptide directing secretion; it reads MSVAKSIAAVLVALLPGALA. 5 N-linked (GlcNAc...) asparagine glycosylation sites follow: Asn23, Asn87, Asn118, Asn142, and Asn246. Asp310 is an active-site residue. 8 N-linked (GlcNAc...) asparagine glycosylation sites follow: Asn326, Asn385, Asn404, Asn440, Asn477, Asn518, Asn679, and Asn701.

It belongs to the glycosyl hydrolase 3 family.

Its subcellular location is the secreted. The catalysed reaction is Hydrolysis of (1-&gt;4)-beta-D-xylans, to remove successive D-xylose residues from the non-reducing termini.. Its pathway is glycan degradation; xylan degradation. In terms of biological role, xylan 1,4-beta-xylosidase involved in the hydrolysis of xylan, a major structural heterogeneous polysaccharide found in plant biomass representing the second most abundant polysaccharide in the biosphere, after cellulose. In Aspergillus fumigatus (strain CBS 144.89 / FGSC A1163 / CEA10) (Neosartorya fumigata), this protein is Probable exo-1,4-beta-xylosidase xlnD (xlnD).